The primary structure comprises 279 residues: Bifunctional protein FolD (279 aa).

Residues 159–161 (GRS), Ser-184, and Thr-225 each bind NADP(+).

Belongs to the tetrahydrofolate dehydrogenase/cyclohydrolase family. In terms of assembly, homodimer.

The enzyme catalyses (6R)-5,10-methylene-5,6,7,8-tetrahydrofolate + NADP(+) = (6R)-5,10-methenyltetrahydrofolate + NADPH. It carries out the reaction (6R)-5,10-methenyltetrahydrofolate + H2O = (6R)-10-formyltetrahydrofolate + H(+). It participates in one-carbon metabolism; tetrahydrofolate interconversion. Functionally, catalyzes the oxidation of 5,10-methylenetetrahydrofolate to 5,10-methenyltetrahydrofolate and then the hydrolysis of 5,10-methenyltetrahydrofolate to 10-formyltetrahydrofolate. This is Bifunctional protein FolD from Methanospirillum hungatei JF-1 (strain ATCC 27890 / DSM 864 / NBRC 100397 / JF-1).